The sequence spans 137 residues: Fatty acid-binding protein homolog 7 (137 aa).

Belongs to the calycin superfamily. Fatty-acid binding protein (FABP) family.

The chain is Fatty acid-binding protein homolog 7 (lbp-7) from Caenorhabditis elegans.